A 367-amino-acid polypeptide reads, in one-letter code: Ferrochelatase (367 aa).

Positions 226 and 307 each coordinate Fe cation.

This sequence belongs to the ferrochelatase family.

The protein resides in the cytoplasm. The catalysed reaction is heme b + 2 H(+) = protoporphyrin IX + Fe(2+). Its pathway is porphyrin-containing compound metabolism; protoheme biosynthesis; protoheme from protoporphyrin-IX: step 1/1. In terms of biological role, catalyzes the ferrous insertion into protoporphyrin IX. The chain is Ferrochelatase from Burkholderia pseudomallei (strain 1106a).